A 339-amino-acid chain; its full sequence is Biotin synthase (339 aa).

Residues 51–278 (TEVELATLLS…KARVRLSAGR (228 aa)) form the Radical SAM core domain. Positions 66, 70, and 73 each coordinate [4Fe-4S] cluster. [2Fe-2S] cluster is bound by residues Cys-110, Cys-141, Cys-201, and Arg-273.

This sequence belongs to the radical SAM superfamily. Biotin synthase family. In terms of assembly, homodimer. Requires [4Fe-4S] cluster as cofactor. [2Fe-2S] cluster is required as a cofactor.

It carries out the reaction (4R,5S)-dethiobiotin + (sulfur carrier)-SH + 2 reduced [2Fe-2S]-[ferredoxin] + 2 S-adenosyl-L-methionine = (sulfur carrier)-H + biotin + 2 5'-deoxyadenosine + 2 L-methionine + 2 oxidized [2Fe-2S]-[ferredoxin]. The protein operates within cofactor biosynthesis; biotin biosynthesis; biotin from 7,8-diaminononanoate: step 2/2. Catalyzes the conversion of dethiobiotin (DTB) to biotin by the insertion of a sulfur atom into dethiobiotin via a radical-based mechanism. In Janthinobacterium sp. (strain Marseille) (Minibacterium massiliensis), this protein is Biotin synthase.